The primary structure comprises 472 residues: Carboxypeptidase Q (472 aa).

The N-terminal stretch at 1-20 is a signal peptide; that stretch reads MRFLFFLFVAVVHLFSLGSG. Residues 21-44 constitute a propeptide that is removed on maturation; that stretch reads KAIYKSGVSQRTFQEIKEEIANYE. N-linked (GlcNAc...) asparagine glycosylation is present at N61. Positions 290 and 302 each coordinate Zn(2+). The active-site Nucleophile is E336. E337 serves as a coordination point for Zn(2+). N353 carries an N-linked (GlcNAc...) asparagine glycan. Residue D364 coordinates Zn(2+). N-linked (GlcNAc...) asparagine glycosylation is present at N396. Residue H434 coordinates Zn(2+).

Belongs to the peptidase M28 family. In terms of assembly, homodimer. The monomeric form is inactive while the homodimer is active. N-glycosylated. The secreted form is modified by hybrid or complex type oligosaccharide chains.

Its subcellular location is the endoplasmic reticulum. The protein resides in the golgi apparatus. It localises to the lysosome. The protein localises to the secreted. In terms of biological role, carboxypeptidase that may play an important role in the hydrolysis of circulating peptides. Catalyzes the hydrolysis of dipeptides with unsubstituted terminals into amino acids. May play a role in the liberation of thyroxine hormone from its thyroglobulin (Tg) precursor. This is Carboxypeptidase Q (Cpq) from Rattus norvegicus (Rat).